A 484-amino-acid polypeptide reads, in one-letter code: L-amino-acid oxidase (484 aa).

Cys-8 and Cys-171 are joined by a disulfide. FAD contacts are provided by residues 41–42, 61–62, and Arg-69; these read MS and EA. His-73 provides a ligand contact to Zn(2+). FAD is bound at residue 85 to 88; it reads GPMR. A substrate-binding site is contributed by Arg-88. Residue Asn-170 is glycosylated (N-linked (GlcNAc...) asparagine). His-221 contributes to the substrate binding site. Val-259 contacts FAD. Glu-277 contacts Zn(2+). Cys-329 and Cys-410 are oxidised to a cystine. Tyr-370 contacts substrate. FAD-binding positions include Glu-455 and 462-467; that span reads GWIDST. Position 462–463 (462–463) interacts with substrate; the sequence is GW.

This sequence belongs to the flavin monoamine oxidase family. FIG1 subfamily. In terms of assembly, homodimer; non-covalently linked. FAD serves as cofactor. In terms of tissue distribution, expressed by the venom gland.

It localises to the secreted. The enzyme catalyses an L-alpha-amino acid + O2 + H2O = a 2-oxocarboxylate + H2O2 + NH4(+). Functionally, catalyzes an oxidative deamination of predominantly hydrophobic and aromatic L-amino acids, thus producing hydrogen peroxide that may contribute to the diverse toxic effects of this enzyme. Exhibits diverse biological activities, such as hemorrhage, hemolysis, edema, apoptosis of vascular endothelial cells or tumor cell lines, antibacterial and antiparasitic activities, as well as regulation of platelet aggregation. Effects of snake L-amino oxidases on platelets are controversial, since they either induce aggregation or inhibit agonist-induced aggregation. These different effects are probably due to different experimental conditions. This Vipera ammodytes ammodytes (Western sand viper) protein is L-amino-acid oxidase.